The following is an 89-amino-acid chain: Large ribosomal subunit protein eL43 (89 aa).

Residues Met-1–Ile-28 form a disordered region. The segment at Cys-38–Cys-59 adopts a C4-type zinc-finger fold.

Belongs to the eukaryotic ribosomal protein eL43 family. Zn(2+) serves as cofactor.

In Methanosphaera stadtmanae (strain ATCC 43021 / DSM 3091 / JCM 11832 / MCB-3), this protein is Large ribosomal subunit protein eL43.